The sequence spans 72 residues: Translation initiation factor IF-1 1 (72 aa).

An S1-like domain is found at 1–72; that stretch reads MAKEDRIEMQ…SRARIIFRAK (72 aa).

The protein belongs to the IF-1 family. As to quaternary structure, component of the 30S ribosomal translation pre-initiation complex which assembles on the 30S ribosome in the order IF-2 and IF-3, IF-1 and N-formylmethionyl-tRNA(fMet); mRNA recruitment can occur at any time during PIC assembly.

The protein localises to the cytoplasm. Functionally, one of the essential components for the initiation of protein synthesis. Stabilizes the binding of IF-2 and IF-3 on the 30S subunit to which N-formylmethionyl-tRNA(fMet) subsequently binds. Helps modulate mRNA selection, yielding the 30S pre-initiation complex (PIC). Upon addition of the 50S ribosomal subunit IF-1, IF-2 and IF-3 are released leaving the mature 70S translation initiation complex. The polypeptide is Translation initiation factor IF-1 1 (Methylobacillus flagellatus (strain ATCC 51484 / DSM 6875 / VKM B-1610 / KT)).